The following is a 147-amino-acid chain: Hemoglobin subunit beta (147 aa).

In terms of domain architecture, Globin spans 2 to 147 (DWTDAERAAI…VVSALGRQYH (146 aa)). Heme b contacts are provided by His63 and His92.

This sequence belongs to the globin family. As to quaternary structure, heterotetramer of two alpha chains and two beta chains. In terms of tissue distribution, red blood cells.

Involved in oxygen transport from gills to the various peripheral tissues. The sequence is that of Hemoglobin subunit beta (hbb) from Leiostomus xanthurus (Spot).